Here is a 102-residue protein sequence, read N- to C-terminus: Salivary protein Salp9 (102 aa).

A signal peptide spans 1–21 (MGLTEIMLVLVSLAFVATAAA). N-linked (GlcNAc...) asparagine glycans are attached at residues Asn26 and Asn87. The disordered stretch occupies residues 83 to 102 (SGVPNDTDAKIEETEEELEA).

The protein belongs to the salp14 family. In terms of tissue distribution, salivary gland (at protein level). Saliva (at protein level). Midgut.

The protein localises to the secreted. Functionally, salivary protein that facilitates blood feeding of adult ticks on vertebrate species. Inhibits the lectin pathway of complement system activation in the host. The sequence is that of Salivary protein Salp9 from Ixodes scapularis (Black-legged tick).